Here is a 297-residue protein sequence, read N- to C-terminus: Ribosomal RNA small subunit methyltransferase A (297 aa).

S-adenosyl-L-methionine contacts are provided by asparagine 31, leucine 33, glycine 58, glutamate 79, aspartate 104, and asparagine 129.

It belongs to the class I-like SAM-binding methyltransferase superfamily. rRNA adenine N(6)-methyltransferase family. RsmA subfamily.

It localises to the cytoplasm. The enzyme catalyses adenosine(1518)/adenosine(1519) in 16S rRNA + 4 S-adenosyl-L-methionine = N(6)-dimethyladenosine(1518)/N(6)-dimethyladenosine(1519) in 16S rRNA + 4 S-adenosyl-L-homocysteine + 4 H(+). Functionally, specifically dimethylates two adjacent adenosines (A1518 and A1519) in the loop of a conserved hairpin near the 3'-end of 16S rRNA in the 30S particle. May play a critical role in biogenesis of 30S subunits. The protein is Ribosomal RNA small subunit methyltransferase A of Staphylococcus aureus (strain Newman).